Consider the following 137-residue polypeptide: Holo-[acyl-carrier-protein] synthase (137 aa).

Residues D8 and E57 each coordinate Mg(2+).

It belongs to the P-Pant transferase superfamily. AcpS family. Requires Mg(2+) as cofactor.

The protein resides in the cytoplasm. It carries out the reaction apo-[ACP] + CoA = holo-[ACP] + adenosine 3',5'-bisphosphate + H(+). Its function is as follows. Transfers the 4'-phosphopantetheine moiety from coenzyme A to a Ser of acyl-carrier-protein. The chain is Holo-[acyl-carrier-protein] synthase from Mesorhizobium japonicum (strain LMG 29417 / CECT 9101 / MAFF 303099) (Mesorhizobium loti (strain MAFF 303099)).